The chain runs to 451 residues: UDP-glucosyltransferase 74AE2 (451 aa).

His17 acts as the Proton acceptor in catalysis. An an anthocyanidin-binding site is contributed by His17. Catalysis depends on Asp108, which acts as the Charge relay. Positions 130, 330, 345, 348, 349, 350, 353, 369, and 370 each coordinate UDP-alpha-D-glucose.

This sequence belongs to the UDP-glycosyltransferase family. As to expression, expressed at higher levels in roots than in leaves.

It carries out the reaction (20S)-ginsenoside C-K + UDP-alpha-D-glucose = (20S)-ginsenoside F2 + UDP + H(+). The enzyme catalyses (20S)-protopanaxadiol + UDP-alpha-D-glucose = (20S)-ginsenoside Rh2 + UDP + H(+). Its pathway is secondary metabolite biosynthesis; terpenoid biosynthesis. Its function is as follows. Component of the dammarane-type triterpene saponins (e.g. PPD-type ginsenosides or panaxosides) biosynthetic pathway. Glycosyltransferase that catalyzes the biosynthesis of ginsenoside Rh2 from protopanaxadiol (PPD) and the conversion of compound K to ginsenoside F2. In Panax ginseng (Korean ginseng), this protein is UDP-glucosyltransferase 74AE2.